Reading from the N-terminus, the 474-residue chain is Aspartyl/glutamyl-tRNA(Asn/Gln) amidotransferase subunit B (474 aa).

The protein belongs to the GatB/GatE family. GatB subfamily. In terms of assembly, heterotrimer of A, B and C subunits.

It catalyses the reaction L-glutamyl-tRNA(Gln) + L-glutamine + ATP + H2O = L-glutaminyl-tRNA(Gln) + L-glutamate + ADP + phosphate + H(+). It carries out the reaction L-aspartyl-tRNA(Asn) + L-glutamine + ATP + H2O = L-asparaginyl-tRNA(Asn) + L-glutamate + ADP + phosphate + 2 H(+). In terms of biological role, allows the formation of correctly charged Asn-tRNA(Asn) or Gln-tRNA(Gln) through the transamidation of misacylated Asp-tRNA(Asn) or Glu-tRNA(Gln) in organisms which lack either or both of asparaginyl-tRNA or glutaminyl-tRNA synthetases. The reaction takes place in the presence of glutamine and ATP through an activated phospho-Asp-tRNA(Asn) or phospho-Glu-tRNA(Gln). This is Aspartyl/glutamyl-tRNA(Asn/Gln) amidotransferase subunit B from Desulfotalea psychrophila (strain LSv54 / DSM 12343).